Here is a 523-residue protein sequence, read N- to C-terminus: Pentatricopeptide repeat-containing protein At1g52640, mitochondrial (523 aa).

The transit peptide at 1 to 5 (MAIRT) directs the protein to the mitochondrion. PPR repeat units lie at residues 101 to 135 (SLESYHILVEILGSSKQFALLWDFLIEAREYNYFE), 137 to 171 (SSKVFWIVFRAYSRANLPSEACRAFNRMVEFGIKP), 172 to 206 (CVDDLDQLLHSLCDKKHVNHAQEFFGKAKGFGIVP), 207 to 241 (SAKTYSILVRGWARIRDASGARKVFDEMLERNCVV), 242 to 276 (DLLAYNALLDALCKSGDVDGGYKMFQEMGNLGLKP), 277 to 311 (DAYSFAIFIHAYCDAGDVHSAYKVLDRMKRYDLVP), 312 to 346 (NVYTFNHIIKTLCKNEKVDDAYLLLDEMIQKGANP), 347 to 381 (DTWTYNSIMAYHCDHCEVNRATKLLSRMDRTKCLP), 382 to 416 (DRHTYNMVLKLLIRIGRFDRATEIWEGMSERKFYP), and 417 to 452 (TVATYTVMIHGLVRKKGKLEEACRYFEMMIDEGIPP). A disordered region spans residues 498–523 (KRRRLGRRSENSEDDDDDFELERDTI). Residues 509 to 523 (SEDDDDDFELERDTI) show a composition bias toward acidic residues.

It belongs to the PPR family. P subfamily.

The protein localises to the mitochondrion. This chain is Pentatricopeptide repeat-containing protein At1g52640, mitochondrial, found in Arabidopsis thaliana (Mouse-ear cress).